A 209-amino-acid chain; its full sequence is Octanoyltransferase (209 aa).

A BPL/LPL catalytic domain is found at 30–209 (DNEPEIVYLV…IQTEFNKIFK (180 aa)). Substrate is bound by residues 69–76 (RGGKFTFH), 143–145 (AIG), and 156–158 (GVA). The Acyl-thioester intermediate role is filled by Cys174.

It belongs to the LipB family.

Its subcellular location is the cytoplasm. The catalysed reaction is octanoyl-[ACP] + L-lysyl-[protein] = N(6)-octanoyl-L-lysyl-[protein] + holo-[ACP] + H(+). It functions in the pathway protein modification; protein lipoylation via endogenous pathway; protein N(6)-(lipoyl)lysine from octanoyl-[acyl-carrier-protein]: step 1/2. Functionally, catalyzes the transfer of endogenously produced octanoic acid from octanoyl-acyl-carrier-protein onto the lipoyl domains of lipoate-dependent enzymes. Lipoyl-ACP can also act as a substrate although octanoyl-ACP is likely to be the physiological substrate. In Rickettsia felis (strain ATCC VR-1525 / URRWXCal2) (Rickettsia azadi), this protein is Octanoyltransferase.